A 262-amino-acid polypeptide reads, in one-letter code: Sperm microtubule inner protein 6 (262 aa).

It belongs to the SPMIP6 family. Microtubule inner protein component of sperm flagellar doublet microtubules. Interacts with alpha-tubulin.

It is found in the cytoplasm. The protein localises to the cytoskeleton. It localises to the nucleus. Its subcellular location is the mitochondrion. The protein resides in the flagellum axoneme. Functionally, may participate in intramanchette transport and midpiece formation of the sperm tail. May play a potential role in somatic cell proliferation. The protein is Sperm microtubule inner protein 6 (SPMIP6) of Macaca fascicularis (Crab-eating macaque).